The primary structure comprises 612 residues: UBA domain-containing protein 6 (612 aa).

Residues 3-42 form the UBA domain; that stretch reads DLDTKIKTLKNMGVSESDAKDSLERCGYDVESAAEFIFSG. A Phosphoserine modification is found at serine 595.

Its subcellular location is the cytoplasm. The protein resides in the nucleus. The polypeptide is UBA domain-containing protein 6 (ucp6) (Schizosaccharomyces pombe (strain 972 / ATCC 24843) (Fission yeast)).